The following is a 263-amino-acid chain: uncharacterized protein (263 aa).

An N-terminal signal peptide occupies residues 1–22; the sequence is MRYLKRVVLYRIVMVLSVFIIG. Cys-23 carries N-palmitoyl cysteine lipidation. A lipid anchor (S-diacylglycerol cysteine) is attached at Cys-23.

The protein belongs to the staphylococcal tandem lipoprotein family.

It localises to the cell membrane. This is an uncharacterized protein from Staphylococcus aureus (strain bovine RF122 / ET3-1).